We begin with the raw amino-acid sequence, 385 residues long: DNA replication and repair protein RecF (385 aa).

ATP is bound at residue 30–37 (GPNGYGKT).

The protein belongs to the RecF family.

The protein resides in the cytoplasm. Functionally, the RecF protein is involved in DNA metabolism; it is required for DNA replication and normal SOS inducibility. RecF binds preferentially to single-stranded, linear DNA. It also seems to bind ATP. The sequence is that of DNA replication and repair protein RecF from Mycobacterium tuberculosis (strain ATCC 25177 / H37Ra).